A 490-amino-acid chain; its full sequence is Cysteine protease 1 (490 aa).

A signal peptide spans 1-31 (MAGGGGKSVAAALAMACFLLILAAFAPPAAA). A propeptide spans 32–154 (APPDIMSIIR…EAYRHDGVEA (123 aa)) (activation peptide). Intrachain disulfides connect cysteine 177–cysteine 220, cysteine 211–cysteine 253, cysteine 311–cysteine 364, cysteine 395–cysteine 407, and cysteine 401–cysteine 422. Cysteine 180 is an active-site residue. Catalysis depends on residues histidine 317 and asparagine 339. A glycan (N-linked (GlcNAc...) asparagine) is linked at asparagine 356. Positions 379 to 490 (NPKPSPPSPA…FVVLNREDLV (112 aa)) are cleaved as a propeptide — removed in mature form.

Belongs to the peptidase C1 family. As to expression, highly expressed in the tapetum and developing pollen of the anther locules. Weakly expressed in root and germinating seed, hardly in the anther-less-flower and not detected in leaf.

Its function is as follows. Cysteine protease that may play a role in pollen development. May be regulated by the transcription factor UDT1 in developing anthers and play a role in tapetum development. Positively regulated by the transcription factor TDR in developing anthers and may play a role in tapetum programmed cell death (PCD). The chain is Cysteine protease 1 (CP1) from Oryza sativa subsp. japonica (Rice).